The following is a 484-amino-acid chain: Dual specificity protein kinase CLK1 (484 aa).

The disordered stretch occupies residues 1 to 42 (MRHSKRTYCPDWDDKDWDYGKWRSSSSHKRRKRSHSSAQENK). Residues 26–35 (SSHKRRKRSH) show a composition bias toward basic residues. A Phosphoserine modification is found at Ser-61. The tract at residues 79–146 (DYTQGCEPGH…RTRSVEDDEE (68 aa)) is disordered. Basic and acidic residues predominate over residues 86 to 97 (PGHRQRDHESRY). Residues 100–112 (HSSKSSGRSGRSS) show a composition bias toward low complexity. Residues 113–138 (YKSKHRIHHSTSHRRSHGKSHRRKRT) are compositionally biased toward basic residues. Residue Thr-138 is modified to Phosphothreonine. At Ser-140 the chain carries Phosphoserine. One can recognise a Protein kinase domain in the interval 161-477 (YEIVDTLGEG…LREALKHPFF (317 aa)). ATP-binding positions include 167–175 (LGEGAFGKV) and Lys-191. Residue Asp-288 is the Proton acceptor of the active site.

Belongs to the protein kinase superfamily. CMGC Ser/Thr protein kinase family. Lammer subfamily. Interacts with PPIG and UBL5. In terms of processing, autophosphorylates on all three types of residues. In terms of tissue distribution, endothelial cells.

The protein localises to the nucleus. It catalyses the reaction L-seryl-[protein] + ATP = O-phospho-L-seryl-[protein] + ADP + H(+). It carries out the reaction L-threonyl-[protein] + ATP = O-phospho-L-threonyl-[protein] + ADP + H(+). The enzyme catalyses L-tyrosyl-[protein] + ATP = O-phospho-L-tyrosyl-[protein] + ADP + H(+). With respect to regulation, regulates splicing of its own pre-mRNA according to its kinase activity; increased expression of the catalytically active form influences splicing to generate the catalytically inactive splicing variant lacking the kinase domain. Leucettine L41 inhibits its kinase activity and affects the regulation of alternative splicing mediated by phosphorylation of SR proteins. Its function is as follows. Dual specificity kinase acting on both serine/threonine and tyrosine-containing substrates. Phosphorylates serine- and arginine-rich (SR) proteins of the spliceosomal complex and may be a constituent of a network of regulatory mechanisms that enable SR proteins to control RNA splicing. Phosphorylates: SRSF1, SRSF3 and PTPN1. Regulates the alternative splicing of tissue factor (F3) pre-mRNA in endothelial cells. This Homo sapiens (Human) protein is Dual specificity protein kinase CLK1.